The chain runs to 133 residues: ATP synthase epsilon chain, chloroplastic (133 aa).

Belongs to the ATPase epsilon chain family. As to quaternary structure, F-type ATPases have 2 components, CF(1) - the catalytic core - and CF(0) - the membrane proton channel. CF(1) has five subunits: alpha(3), beta(3), gamma(1), delta(1), epsilon(1). CF(0) has three main subunits: a, b and c.

Its subcellular location is the plastid. The protein localises to the chloroplast thylakoid membrane. In terms of biological role, produces ATP from ADP in the presence of a proton gradient across the membrane. This Chara vulgaris (Common stonewort) protein is ATP synthase epsilon chain, chloroplastic.